The sequence spans 83 residues: MSSGGLLLLLGLLTLWEALTPVSSTDRPEFCELPEDSGPCKGLFHVFYYNSDQNQRLEFIYGGCYGNANNFKTIEECKRTCAA.

A signal peptide spans 1-24; the sequence is MSSGGLLLLLGLLTLWEALTPVSS. The BPTI/Kunitz inhibitor domain maps to 31 to 81; the sequence is CELPEDSGPCKGLFHVFYYNSDQNQRLEFIYGGCYGNANNFKTIEECKRTC. 2 disulfide bridges follow: Cys-31–Cys-81 and Cys-40–Cys-64.

This sequence belongs to the venom Kunitz-type family. As to expression, expressed by the venom gland.

The protein resides in the secreted. In terms of biological role, serine protease inhibitor. The polypeptide is Kunitz-type serine protease inhibitor nigrescinin-3 (Cryptophis nigrescens (Eastern small-eyed snake)).